Consider the following 558-residue polypeptide: Arginine--tRNA ligase (558 aa).

The short motif at 119-129 (ANPDGPLHVGH) is the 'HIGH' region element.

This sequence belongs to the class-I aminoacyl-tRNA synthetase family.

The protein resides in the cytoplasm. The enzyme catalyses tRNA(Arg) + L-arginine + ATP = L-arginyl-tRNA(Arg) + AMP + diphosphate. The sequence is that of Arginine--tRNA ligase from Methanothrix thermoacetophila (strain DSM 6194 / JCM 14653 / NBRC 101360 / PT) (Methanosaeta thermophila).